The primary structure comprises 289 residues: Diacylglycerol pyrophosphate phosphatase 1 (289 aa).

Residues 1-21 (MNRVSFIKTPFNIGAKWRLED) are Vacuolar-facing. The chain crosses the membrane as a helical span at residues 22–42 (VFLLIIMILLNYPVYYQQPFE). The Cytoplasmic segment spans residues 43–65 (RQFYINDLTISHPYATTERVNNN). A helical membrane pass occupies residues 66–86 (MLFVYSFVVPSLTILIIGSIL). Residues 87–92 (ADRRHL) lie on the Vacuolar side of the membrane. Residues 93–113 (IFILYTSLLGLSLAWFSTSFF) form a helical membrane-spanning segment. The Cytoplasmic segment spans residues 114–172 (TNFIKNWIGRLRPDFLDRCQPVEGLPLDTLFTAKDVCTTKNHERLLDGFRTTPSGHSSE). The phosphatase sequence motif I stretch occupies residues 118-126 (KNWIGRLRP). A phosphatase sequence motif II region spans residues 166–169 (PSGH). A run of 2 helical transmembrane segments spans residues 173–193 (SFAGLGYLYFWLCGQLLTESP) and 194–214 (LMPLWRKMVAFLPLLGAALIA). Residues 215-222 (LSRTQDYR) are Cytoplasmic-facing. Residues 216 to 227 (SRTQDYRHHFVD) are phosphatase sequence motif III. Residues 223–243 (HHFVDVILGSMLGYIMAHFFY) traverse the membrane as a helical segment. Topologically, residues 244–289 (RRIFPPIDDPLPFKPLMDDSDVTLEEAVTHQRIPDEELHPLSDEGM) are vacuolar. Phosphoserine is present on Ser285.

The protein belongs to the PA-phosphatase related phosphoesterase family.

It localises to the vacuole membrane. The catalysed reaction is a 1,2-diacyl-sn-glycerol 3-diphosphate + H2O = a 1,2-diacyl-sn-glycero-3-phosphate + phosphate + H(+). The enzyme catalyses a 1,2-diacyl-sn-glycero-3-phosphate + H2O = a 1,2-diacyl-sn-glycerol + phosphate. It catalyses the reaction a 1-acyl-sn-glycero-3-phosphate + H2O = a 1-acyl-sn-glycerol + phosphate. Its activity is regulated as follows. Inhibited by sodium fluoride (NaF) and pyrophosphate. Strongly inhibited by manganese ion and, to a lower extent, by magnesium and calcium ions. Also inhibited by Cu(2+) ion. In an indirect manner, it is also inhibited by the zinc ion which is able to form a complex with DGPP and prevent the enzyme from removing the phosphate from the substrate. Not inhibited by N-ethylmaleimide. In terms of biological role, catalyzes the dephosphorylation of diacylglycerol diphosphate (DGPP) to phosphatidate (PA) and the subsequent dephosphorylation of PA to diacylglycerol (DAG). Together with LPP1, regulates intracellular DGPP and PA levels, which are phospholipid molecules believed to play a signaling role in stress response. Can also use lysophosphatidic acid (LPA) and phosphatidylglycerophosphate as substrates. Substrate preference is DGPP &gt; LPA &gt; PA. Activity is independent of a divalent cation ion and insensitive to inhibition by N-ethylmaleimide. The protein is Diacylglycerol pyrophosphate phosphatase 1 (DPP1) of Saccharomyces cerevisiae (strain ATCC 204508 / S288c) (Baker's yeast).